Here is a 449-residue protein sequence, read N- to C-terminus: Glutamyl-tRNA reductase (449 aa).

Substrate contacts are provided by residues 48 to 51, S99, 104 to 106, and Q110; these read TCNR and EDQ. C49 functions as the Nucleophile in the catalytic mechanism. NADP(+) is bound at residue 179 to 184; it reads GAGEIG.

The protein belongs to the glutamyl-tRNA reductase family. In terms of assembly, homodimer.

It catalyses the reaction (S)-4-amino-5-oxopentanoate + tRNA(Glu) + NADP(+) = L-glutamyl-tRNA(Glu) + NADPH + H(+). It participates in porphyrin-containing compound metabolism; protoporphyrin-IX biosynthesis; 5-aminolevulinate from L-glutamyl-tRNA(Glu): step 1/2. Its function is as follows. Catalyzes the NADPH-dependent reduction of glutamyl-tRNA(Glu) to glutamate 1-semialdehyde (GSA). The sequence is that of Glutamyl-tRNA reductase from Methanosarcina barkeri (strain Fusaro / DSM 804).